The following is a 704-amino-acid chain: Elongation factor G (704 aa).

In terms of domain architecture, tr-type G spans 8-290 (ARYRNIGISA…AVIDYLPSPV (283 aa)). Residues 17 to 24 (AHIDAGKT), 88 to 92 (DTPGH), and 142 to 145 (NKMD) contribute to the GTP site.

The protein belongs to the TRAFAC class translation factor GTPase superfamily. Classic translation factor GTPase family. EF-G/EF-2 subfamily.

It is found in the cytoplasm. Functionally, catalyzes the GTP-dependent ribosomal translocation step during translation elongation. During this step, the ribosome changes from the pre-translocational (PRE) to the post-translocational (POST) state as the newly formed A-site-bound peptidyl-tRNA and P-site-bound deacylated tRNA move to the P and E sites, respectively. Catalyzes the coordinated movement of the two tRNA molecules, the mRNA and conformational changes in the ribosome. The sequence is that of Elongation factor G from Salmonella agona (strain SL483).